Consider the following 500-residue polypeptide: Probable betaine aldehyde dehydrogenase (500 aa).

249 to 254 (GSLATG) contacts NAD(+). Residue Glu-271 is the Proton acceptor of the active site. Cys-305 (nucleophile) is an active-site residue.

It belongs to the aldehyde dehydrogenase family.

The catalysed reaction is betaine aldehyde + NAD(+) + H2O = glycine betaine + NADH + 2 H(+). Its pathway is amine and polyamine biosynthesis; betaine biosynthesis via choline pathway; betaine from betaine aldehyde: step 1/1. In Schizosaccharomyces pombe (strain 972 / ATCC 24843) (Fission yeast), this protein is Probable betaine aldehyde dehydrogenase (meu8).